The sequence spans 330 residues: Probable inactive heme oxygenase 2, chloroplastic (330 aa).

Low complexity-rich tracts occupy residues 1-13 and 56-69; these read MPLA…SAVV and AAEA…VDEA. Disordered regions lie at residues 1 to 27, 50 to 82, and 107 to 156; these read MPLA…RARP, PSPP…YPRQ, and TTLK…LEGE. The transit peptide at 1–47 directs the protein to the chloroplast; it reads MPLAAAVAASAVVPPRPPPPPPRRARPLRSFTGLILTRDLAALTVAR. Positions 114–151 are enriched in acidic residues; that stretch reads TGAEEEVGDGVSEDASASEEEEEEEDDDDVVEEEEEGA.

The protein belongs to the heme oxygenase family.

Its subcellular location is the plastid. It is found in the chloroplast. Its function is as follows. Probable inactive heme oxygenase that may play a role in the regulation of phytochrome assembly and photomorphogenesis. This is Probable inactive heme oxygenase 2, chloroplastic (HO2) from Oryza sativa subsp. japonica (Rice).